A 119-amino-acid chain; its full sequence is Large ribosomal subunit protein bL20 (119 aa).

The protein belongs to the bacterial ribosomal protein bL20 family.

Its function is as follows. Binds directly to 23S ribosomal RNA and is necessary for the in vitro assembly process of the 50S ribosomal subunit. It is not involved in the protein synthesizing functions of that subunit. In Shewanella halifaxensis (strain HAW-EB4), this protein is Large ribosomal subunit protein bL20.